The chain runs to 467 residues: AT-rich interactive domain-containing protein cfi-1 (467 aa).

The segment at 1-56 (MSVRIDEPQLFVSMSKEPTQETVNVGGHHDDSSSNCDERVDDQTEEQKSPPASPDL) is disordered. Positions 27–48 (GHHDDSSSNCDERVDDQTEEQK) are enriched in basic and acidic residues. Residues 181-273 (DVKRKEWLDD…YLYDYECEKE (93 aa)) enclose the ARID domain. The REKLES domain occupies 356-464 (AILEAHQRNL…GVLFALDETV (109 aa)). A disordered region spans residues 383 to 441 (LTACSNGNGGNIHNSGRESTSSNDSDIPAKRPKLENDVKTNGASSMRISTKHSDNSKTS). Over residues 409-420 (IPAKRPKLENDV) the composition is skewed to basic and acidic residues. Polar residues predominate over residues 421-430 (KTNGASSMRI).

In terms of tissue distribution, present in IL2 and URA neurons, and in AVD and PVC interneurons. Present in muscles from head and pharynx (at protein level).

It localises to the nucleus. Transcription factor. Regulates neuronal subtype identity. Involved in motor neuron fate determination and maintenance, acting as a transcriptional repressor to counteract gene activation by transcription factor unc-3 in a subset of motor neurons. Probably acts by binding to specific promoter elements. Promotes differentiation of URA sensory neurons and prevents them from expressing male-specific CEM neuronal features. Promotes differentiation of AVD and PVC interneurons and their glutamate receptor expression. The sequence is that of AT-rich interactive domain-containing protein cfi-1 (cfi-1) from Caenorhabditis elegans.